The chain runs to 780 residues: ATP-dependent 6-phosphofructokinase, muscle type (780 aa).

Threonine 2 bears the N-acetylthreonine mark. Positions 2 to 390 are N-terminal catalytic PFK domain 1; that stretch reads THEEHHATKT…NWEVYKLLAH (389 aa). ATP-binding positions include glycine 25, 88 to 89, and 118 to 121; these read RC and GDGS. Position 119 (aspartate 119) interacts with Mg(2+). Residue serine 133 is modified to Phosphoserine. Substrate-binding positions include 164–166, arginine 201, 208–210, glutamate 264, arginine 292, and 298–301; these read SID, MGR, and HVQR. Aspartate 166 (proton acceptor) is an active-site residue. At serine 377 the chain carries Phosphoserine. Positions 391–401 are interdomain linker; sequence VRPPVSKSGSH. The C-terminal regulatory PFK domain 2 stretch occupies residues 402–780; the sequence is TVAVMNVGAP…TRKRSGEAAV (379 aa). Beta-D-fructose 2,6-bisphosphate contacts are provided by residues arginine 471 and 528–532; that span reads TVSNN. Serine 530 carries an O-linked (GlcNAc) serine glycan. Lysine 557 carries the post-translational modification N6-(2-hydroxyisobutyryl)lysine. Residues arginine 566, 573–575, glutamate 629, arginine 655, and 661–664 each bind beta-D-fructose 2,6-bisphosphate; these read MGG and HMQQ. Phosphoserine is present on serine 667. Residue arginine 735 participates in beta-D-fructose 2,6-bisphosphate binding. Serine 775 carries the post-translational modification Phosphoserine.

Belongs to the phosphofructokinase type A (PFKA) family. ATP-dependent PFK group I subfamily. Eukaryotic two domain clade 'E' sub-subfamily. As to quaternary structure, homo- and heterotetramers. Phosphofructokinase (PFK) enzyme functions as a tetramer composed of different combinations of 3 types of subunits, called PFKM (M), PFKL (L) and PFKP (P). The composition of the PFK tetramer differs according to the tissue type it is present in. The kinetic and regulatory properties of the tetrameric enzyme are dependent on the subunit composition, hence can vary across tissues. Interacts (via C-terminus) with HK1 (via N-terminal spermatogenic cell-specific region). Requires Mg(2+) as cofactor. In terms of processing, glcNAcylation decreases enzyme activity.

It localises to the cytoplasm. It carries out the reaction beta-D-fructose 6-phosphate + ATP = beta-D-fructose 1,6-bisphosphate + ADP + H(+). It participates in carbohydrate degradation; glycolysis; D-glyceraldehyde 3-phosphate and glycerone phosphate from D-glucose: step 3/4. With respect to regulation, allosterically activated by ADP, AMP, or fructose 2,6-bisphosphate, and allosterically inhibited by ATP or citrate. Functionally, catalyzes the phosphorylation of D-fructose 6-phosphate to fructose 1,6-bisphosphate by ATP, the first committing step of glycolysis. This is ATP-dependent 6-phosphofructokinase, muscle type (PFKM) from Pongo abelii (Sumatran orangutan).